The chain runs to 192 residues: Pyridoxal 5'-phosphate synthase subunit PdxT (192 aa).

47-49 (GES) contributes to the L-glutamine binding site. The Nucleophile role is filled by Cys79. L-glutamine contacts are provided by residues Arg106 and 134 to 135 (IR). Catalysis depends on charge relay system residues His170 and Glu172.

It belongs to the glutaminase PdxT/SNO family. In terms of assembly, in the presence of PdxS, forms a dodecamer of heterodimers. Only shows activity in the heterodimer.

The enzyme catalyses aldehydo-D-ribose 5-phosphate + D-glyceraldehyde 3-phosphate + L-glutamine = pyridoxal 5'-phosphate + L-glutamate + phosphate + 3 H2O + H(+). It carries out the reaction L-glutamine + H2O = L-glutamate + NH4(+). The protein operates within cofactor biosynthesis; pyridoxal 5'-phosphate biosynthesis. In terms of biological role, catalyzes the hydrolysis of glutamine to glutamate and ammonia as part of the biosynthesis of pyridoxal 5'-phosphate. The resulting ammonia molecule is channeled to the active site of PdxS. In Geobacillus sp. (strain WCH70), this protein is Pyridoxal 5'-phosphate synthase subunit PdxT.